We begin with the raw amino-acid sequence, 151 residues long: Small ribosomal subunit protein uS13 (151 aa).

The disordered stretch occupies residues 131-151 (RGQRTKSSFRRGRTVGVKKKQ). Basic residues predominate over residues 133 to 151 (QRTKSSFRRGRTVGVKKKQ).

The protein belongs to the universal ribosomal protein uS13 family. Part of the 30S ribosomal subunit. Forms a loose heterodimer with protein S19. Forms two bridges to the 50S subunit in the 70S ribosome.

Functionally, located at the top of the head of the 30S subunit, it contacts several helices of the 16S rRNA. In the 70S ribosome it contacts the 23S rRNA (bridge B1a) and protein L5 of the 50S subunit (bridge B1b), connecting the 2 subunits; these bridges are implicated in subunit movement. The protein is Small ribosomal subunit protein uS13 of Methanopyrus kandleri (strain AV19 / DSM 6324 / JCM 9639 / NBRC 100938).